Consider the following 460-residue polypeptide: tRNA modification GTPase MnmE (460 aa).

3 residues coordinate (6S)-5-formyl-5,6,7,8-tetrahydrofolate: Arg-22, Glu-83, and Lys-122. In terms of domain architecture, TrmE-type G spans Gly-219–Gln-381. K(+) is bound at residue Asn-229. GTP contacts are provided by residues Asn-229–Ser-234, Ser-248–Thr-254, and Asp-273–Gly-276. Residue Ser-233 participates in Mg(2+) binding. Residues Ser-248, Ile-250, and Thr-253 each coordinate K(+). A Mg(2+)-binding site is contributed by Thr-254. Lys-460 provides a ligand contact to (6S)-5-formyl-5,6,7,8-tetrahydrofolate.

It belongs to the TRAFAC class TrmE-Era-EngA-EngB-Septin-like GTPase superfamily. TrmE GTPase family. In terms of assembly, homodimer. Heterotetramer of two MnmE and two MnmG subunits. It depends on K(+) as a cofactor.

Its subcellular location is the cytoplasm. In terms of biological role, exhibits a very high intrinsic GTPase hydrolysis rate. Involved in the addition of a carboxymethylaminomethyl (cmnm) group at the wobble position (U34) of certain tRNAs, forming tRNA-cmnm(5)s(2)U34. This is tRNA modification GTPase MnmE from Aster yellows witches'-broom phytoplasma (strain AYWB).